The chain runs to 130 residues: Glycine cleavage system H protein (130 aa).

Residues 28–110 (TVRIGITSVA…FGEGWLFEVE (83 aa)) enclose the Lipoyl-binding domain. Position 69 is an N6-lipoyllysine (Lys69).

This sequence belongs to the GcvH family. The glycine cleavage system is composed of four proteins: P, T, L and H. (R)-lipoate is required as a cofactor.

In terms of biological role, the glycine cleavage system catalyzes the degradation of glycine. The H protein shuttles the methylamine group of glycine from the P protein to the T protein. In Corynebacterium aurimucosum (strain ATCC 700975 / DSM 44827 / CIP 107346 / CN-1) (Corynebacterium nigricans), this protein is Glycine cleavage system H protein.